We begin with the raw amino-acid sequence, 351 residues long: Tropomodulin-2 (351 aa).

S25 carries the post-translational modification Phosphoserine.

This sequence belongs to the tropomodulin family. As to quaternary structure, binds to the N-terminus of tropomyosin and to actin. Neuronal-tissue specific.

The protein localises to the cytoplasm. The protein resides in the cytoskeleton. In terms of biological role, blocks the elongation and depolymerization of the actin filaments at the pointed end. The Tmod/TM complex contributes to the formation of the short actin protofilament, which in turn defines the geometry of the membrane skeleton. This Homo sapiens (Human) protein is Tropomodulin-2 (TMOD2).